The following is a 146-amino-acid chain: Hemoglobin subunit beta (146 aa).

One can recognise a Globin domain in the interval 2 to 146 (HWSAEEKQLI…VAHALARKYH (145 aa)). Residues H63 and H92 each coordinate heme b.

Belongs to the globin family. As to quaternary structure, heterotetramer of two alpha chains and two beta chains. Red blood cells.

Its function is as follows. Involved in oxygen transport from the lung to the various peripheral tissues. The chain is Hemoglobin subunit beta (HBB) from Anser anser anser (Western greylag goose).